The following is a 90-amino-acid chain: MARNVQCIKLGCEAEGLDFPPYPGELGKRIFENVSREAWGQWIKHQTMLVNEMRLSMADIKARKYLATQMEAYFFGEGAEQPVGYVPPEK.

The protein belongs to the Fe(2+)-trafficking protein family.

In terms of biological role, could be a mediator in iron transactions between iron acquisition and iron-requiring processes, such as synthesis and/or repair of Fe-S clusters in biosynthetic enzymes. This chain is Probable Fe(2+)-trafficking protein, found in Nitrosomonas eutropha (strain DSM 101675 / C91 / Nm57).